We begin with the raw amino-acid sequence, 257 residues long: Aspartate/glutamate leucyltransferase (257 aa).

This sequence belongs to the R-transferase family. Bpt subfamily.

Its subcellular location is the cytoplasm. The catalysed reaction is N-terminal L-glutamyl-[protein] + L-leucyl-tRNA(Leu) = N-terminal L-leucyl-L-glutamyl-[protein] + tRNA(Leu) + H(+). It carries out the reaction N-terminal L-aspartyl-[protein] + L-leucyl-tRNA(Leu) = N-terminal L-leucyl-L-aspartyl-[protein] + tRNA(Leu) + H(+). Functions in the N-end rule pathway of protein degradation where it conjugates Leu from its aminoacyl-tRNA to the N-termini of proteins containing an N-terminal aspartate or glutamate. The protein is Aspartate/glutamate leucyltransferase of Leptospira interrogans serogroup Icterohaemorrhagiae serovar copenhageni (strain Fiocruz L1-130).